Consider the following 257-residue polypeptide: tRNA uridine(34) hydroxylase (257 aa).

The region spanning Asn-128–Tyr-222 is the Rhodanese domain. The active-site Cysteine persulfide intermediate is the Cys-182.

This sequence belongs to the TrhO family.

The enzyme catalyses uridine(34) in tRNA + AH2 + O2 = 5-hydroxyuridine(34) in tRNA + A + H2O. Its function is as follows. Catalyzes oxygen-dependent 5-hydroxyuridine (ho5U) modification at position 34 in tRNAs. The polypeptide is tRNA uridine(34) hydroxylase (Xylella fastidiosa (strain 9a5c)).